Here is a 467-residue protein sequence, read N- to C-terminus: Uronate isomerase (467 aa).

Belongs to the metallo-dependent hydrolases superfamily. Uronate isomerase family.

It carries out the reaction D-glucuronate = D-fructuronate. The enzyme catalyses aldehydo-D-galacturonate = keto-D-tagaturonate. It participates in carbohydrate metabolism; pentose and glucuronate interconversion. This Haemophilus influenzae (strain PittGG) protein is Uronate isomerase.